We begin with the raw amino-acid sequence, 441 residues long: ATP-dependent protease ATPase subunit HslU (441 aa).

Residues valine 18, 60–65 (GVGKTE), aspartate 254, glutamate 319, and arginine 391 contribute to the ATP site.

The protein belongs to the ClpX chaperone family. HslU subfamily. A double ring-shaped homohexamer of HslV is capped on each side by a ring-shaped HslU homohexamer. The assembly of the HslU/HslV complex is dependent on binding of ATP.

It is found in the cytoplasm. Its function is as follows. ATPase subunit of a proteasome-like degradation complex; this subunit has chaperone activity. The binding of ATP and its subsequent hydrolysis by HslU are essential for unfolding of protein substrates subsequently hydrolyzed by HslV. HslU recognizes the N-terminal part of its protein substrates and unfolds these before they are guided to HslV for hydrolysis. In Verminephrobacter eiseniae (strain EF01-2), this protein is ATP-dependent protease ATPase subunit HslU.